The following is a 242-amino-acid chain: RNA polymerase sigma factor for flagellar operon (242 aa).

Residues 55 to 68 carry the Polymerase core binding motif; sequence DMQQIGLIALVEAG. Positions 211 to 230 form a DNA-binding region, H-T-H motif; that stretch reads LHEIALVLDLTPPRICQLHK.

The protein belongs to the sigma-70 factor family.

In terms of biological role, sigma factors are initiation factors that promote the attachment of RNA polymerase to specific initiation sites and are then released. This alternative sigma factor is specific for the flagellin gene (fliC) expression. The polypeptide is RNA polymerase sigma factor for flagellar operon (lafS) (Vibrio parahaemolyticus serotype O3:K6 (strain RIMD 2210633)).